The sequence spans 262 residues: Phosphonates import ATP-binding protein PhnC (262 aa).

In terms of domain architecture, ABC transporter spans 5–253 (IRVEKLAKTF…RFDHLYRSIN (249 aa)). ATP is bound at residue 37–44 (GPSGSGKS).

This sequence belongs to the ABC transporter superfamily. Phosphonates importer (TC 3.A.1.9.1) family. The complex is composed of two ATP-binding proteins (PhnC), two transmembrane proteins (PhnE) and a solute-binding protein (PhnD).

The protein resides in the cell inner membrane. It carries out the reaction phosphonate(out) + ATP + H2O = phosphonate(in) + ADP + phosphate + H(+). Its function is as follows. Part of the ABC transporter complex PhnCDE involved in phosphonates import. Responsible for energy coupling to the transport system. The chain is Phosphonates import ATP-binding protein PhnC from Escherichia coli O6:H1 (strain CFT073 / ATCC 700928 / UPEC).